Consider the following 325-residue polypeptide: Replication factor C small subunit (325 aa).

47 to 54 is an ATP binding site; sequence GPPGTGKT.

It belongs to the activator 1 small subunits family. RfcS subfamily. As to quaternary structure, heteromultimer composed of small subunits (RfcS) and large subunits (RfcL).

In terms of biological role, part of the RFC clamp loader complex which loads the PCNA sliding clamp onto DNA. This chain is Replication factor C small subunit, found in Aeropyrum pernix (strain ATCC 700893 / DSM 11879 / JCM 9820 / NBRC 100138 / K1).